A 107-amino-acid chain; its full sequence is uncharacterized protein (107 aa).

Residues 13 to 68 (LQEEFLEPLSLKISDLAQILDVHRNTASNIVNNSSRITLEMAVKLAKVFDTTPEFW) enclose the HTH cro/C1-type domain. Positions 24–43 (KISDLAQILDVHRNTASNIV) form a DNA-binding region, H-T-H motif.

Belongs to the VapA/VapI family.

This is an uncharacterized protein from Haemophilus influenzae (strain ATCC 51907 / DSM 11121 / KW20 / Rd).